Consider the following 1179-residue polypeptide: Integrin alpha-E (1179 aa).

The signal sequence occupies residues 1-18 (MWLFHTLLCIASLALLAA). Residues 19–1124 (FNVDVARPWL…VFLKDEKYHS (1106 aa)) lie on the Extracellular side of the membrane. FG-GAP repeat units lie at residues 22 to 79 (DVAR…EILC) and 80 to 138 (HPVE…PQAQ). The N-linked (GlcNAc...) asparagine glycan is linked to asparagine 49. Intrachain disulfides connect cysteine 70–cysteine 79 and cysteine 126–cysteine 159. The X-domain (extra domain) stretch occupies residues 145–199 (ENLLDPDARVDTGDCYSNKEGGGEDDVNTARQRRALEKEEEEDKEEEEDEEEEEA). The segment at 158–200 (DCYSNKEGGGEDDVNTARQRRALEKEEEEDKEEEEDEEEEEAG) is disordered. The span at 182 to 200 (KEEEEDKEEEEDEEEEEAG) shows a compositional bias: acidic residues. One can recognise a VWFA domain in the interval 200 to 389 (GTEIAIILDG…SKLRYNIISM (190 aa)). N-linked (GlcNAc...) asparagine glycosylation is found at asparagine 271 and asparagine 321. Residues 390 to 442 (EGTVGDALHYQLAQIGFSAQILDERQVLLGAVGAFDWSGGALLYDTRSRRGRF) form an FG-GAP 3 repeat. N-linked (GlcNAc...) asparagine glycosylation occurs at asparagine 444. FG-GAP repeat units lie at residues 447-499 (AAAA…GREA), 500-560 (SFLP…DGSF), 563-627 (ARIL…GLSA), and 631-691 (QRIR…FTPS). Residues aspartate 522, aspartate 524, aspartate 526, aspartate 530, aspartate 586, serine 588, aspartate 590, aspartate 594, aspartate 654, serine 656, aspartate 658, and aspartate 662 each coordinate Ca(2+). Cysteine 706 and cysteine 762 are oxidised to a cystine. N-linked (GlcNAc...) asparagine glycosylation is found at asparagine 726 and asparagine 782. A disulfide bridge links cysteine 823 with cysteine 829. N-linked (GlcNAc...) asparagine glycosylation occurs at asparagine 857. Cysteine 893 and cysteine 907 are oxidised to a cystine. N-linked (GlcNAc...) asparagine glycosylation is found at asparagine 934 and asparagine 954. 2 disulfides stabilise this stretch: cysteine 1008–cysteine 1033 and cysteine 1041–cysteine 1057. Residues asparagine 1065 and asparagine 1096 are each glycosylated (N-linked (GlcNAc...) asparagine). The helical transmembrane segment at 1125 to 1147 (LPIIIKGSVGGLLVLIVILVILF) threads the bilayer. At 1148-1179 (KCGFFKRKYQQLNLESIRKAQLKSENLLEEEN) the chain is on the cytoplasmic side. The GFFKR motif motif lies at 1150 to 1154 (GFFKR).

Belongs to the integrin alpha chain family. As to quaternary structure, heterodimer of an alpha and a beta subunit. The alpha subunit is composed of a heavy and a light chains linked by a disulfide bond. Alpha-E associates with beta-7. In terms of tissue distribution, expressed on a subclass of T-lymphocytes known as intra-epithelial lymphocytes which are located between mucosal epithelial cells.

It is found in the membrane. Integrin alpha-E/beta-7 is a receptor for E-cadherin. It mediates adhesion of intra-epithelial T-lymphocytes to epithelial cell monolayers. In Homo sapiens (Human), this protein is Integrin alpha-E (ITGAE).